The chain runs to 140 residues: ATP synthase epsilon chain (140 aa).

This sequence belongs to the ATPase epsilon chain family. As to quaternary structure, F-type ATPases have 2 components, CF(1) - the catalytic core - and CF(0) - the membrane proton channel. CF(1) has five subunits: alpha(3), beta(3), gamma(1), delta(1), epsilon(1). CF(0) has three main subunits: a, b and c.

The protein resides in the cell inner membrane. Functionally, produces ATP from ADP in the presence of a proton gradient across the membrane. The sequence is that of ATP synthase epsilon chain from Laribacter hongkongensis (strain HLHK9).